We begin with the raw amino-acid sequence, 372 residues long: Riboflavin biosynthesis protein RibD (372 aa).

Residues 1–150 (MLEFSSQDCV…KGFLKRMRQG (150 aa)) form a deaminase region. A CMP/dCMP-type deaminase domain is found at 6–128 (SQDCVFMQRA…MLSDAGIEST (123 aa)). H55 contributes to the Zn(2+) binding site. E57 serves as the catalytic Proton donor. Zn(2+) contacts are provided by C80 and C89. Residues 151–372 (MPFVQLKLAM…IKLTYTPKGV (222 aa)) form a reductase region. Residues A159 and 166-169 (TAMA) each bind NADP(+). S173 contributes to the substrate binding site. Residue W175 coordinates NADP(+). R189 contacts substrate. NADP(+) is bound by residues T201 and D205. Positions 209 and 212 each coordinate substrate. NADP(+) is bound at residue S239. E302 contributes to the substrate binding site. 304–310 (GANLSGS) provides a ligand contact to NADP(+).

This sequence in the N-terminal section; belongs to the cytidine and deoxycytidylate deaminase family. The protein in the C-terminal section; belongs to the HTP reductase family. Requires Zn(2+) as cofactor.

It carries out the reaction 2,5-diamino-6-hydroxy-4-(5-phosphoribosylamino)-pyrimidine + H2O + H(+) = 5-amino-6-(5-phospho-D-ribosylamino)uracil + NH4(+). The enzyme catalyses 5-amino-6-(5-phospho-D-ribitylamino)uracil + NADP(+) = 5-amino-6-(5-phospho-D-ribosylamino)uracil + NADPH + H(+). It participates in cofactor biosynthesis; riboflavin biosynthesis; 5-amino-6-(D-ribitylamino)uracil from GTP: step 2/4. It functions in the pathway cofactor biosynthesis; riboflavin biosynthesis; 5-amino-6-(D-ribitylamino)uracil from GTP: step 3/4. Its function is as follows. Converts 2,5-diamino-6-(ribosylamino)-4(3h)-pyrimidinone 5'-phosphate into 5-amino-6-(ribosylamino)-2,4(1h,3h)-pyrimidinedione 5'-phosphate. The sequence is that of Riboflavin biosynthesis protein RibD (ribD) from Haemophilus influenzae (strain ATCC 51907 / DSM 11121 / KW20 / Rd).